Consider the following 147-residue polypeptide: Protein SPMIP3 (147 aa).

In Homo sapiens (Human), this protein is Protein SPMIP3.